The primary structure comprises 37 residues: Large ribosomal subunit protein bL36 (37 aa).

This sequence belongs to the bacterial ribosomal protein bL36 family.

The protein is Large ribosomal subunit protein bL36 of Helicobacter pylori (strain ATCC 700392 / 26695) (Campylobacter pylori).